The sequence spans 588 residues: Proteasome-associated ATPase (588 aa).

Residues 1–10 (MAAHDDDMNR) show a composition bias toward basic and acidic residues. Residues 1 to 23 (MAAHDDDMNRGIRPGRGSEDPAG) form a disordered region. A coiled-coil region spans residues 47–94 (RILEERIVELQTNLAGVSAQNERLAGTLREARDQIVALKEEVDRLAQP). Residue 276-281 (GCGKTL) participates in ATP binding. The tract at residues 587-588 (YL) is docks into pockets in the proteasome alpha-ring.

It belongs to the AAA ATPase family. In terms of assembly, homohexamer. Assembles into a hexameric ring structure that caps the 20S proteasome core. Strongly interacts with the prokaryotic ubiquitin-like protein Pup through a hydrophobic interface; the interacting region of ARC lies in its N-terminal coiled-coil domain. There is one Pup binding site per ARC hexamer ring. Upon ATP-binding, the C-terminus of ARC interacts with the alpha-rings of the proteasome core, possibly by binding to the intersubunit pockets.

It functions in the pathway protein degradation; proteasomal Pup-dependent pathway. Functionally, ATPase which is responsible for recognizing, binding, unfolding and translocation of pupylated proteins into the bacterial 20S proteasome core particle. May be essential for opening the gate of the 20S proteasome via an interaction with its C-terminus, thereby allowing substrate entry and access to the site of proteolysis. Thus, the C-termini of the proteasomal ATPase may function like a 'key in a lock' to induce gate opening and therefore regulate proteolysis. This Streptomyces coelicolor (strain ATCC BAA-471 / A3(2) / M145) protein is Proteasome-associated ATPase.